The chain runs to 494 residues: Ketol-acid reductoisomerase (NADP(+)) (494 aa).

Residues 14-208 form the KARI N-terminal Rossmann domain; that stretch reads LDQLGRCRFM…GGHRAGCLES (195 aa). NADP(+)-binding positions include 45 to 48, arginine 68, arginine 76, serine 78, and 108 to 110; these read CGAQ and DKQ. The active site involves histidine 132. NADP(+) is bound at residue glycine 158. KARI C-terminal knotted domains are found at residues 209–344 and 345–487; these read SFVA…NYPD and SSLE…MTDM. Positions 217, 221, 389, and 393 each coordinate Mg(2+). Position 414 (serine 414) interacts with substrate.

It belongs to the ketol-acid reductoisomerase family. Mg(2+) is required as a cofactor.

It catalyses the reaction (2R)-2,3-dihydroxy-3-methylbutanoate + NADP(+) = (2S)-2-acetolactate + NADPH + H(+). It carries out the reaction (2R,3R)-2,3-dihydroxy-3-methylpentanoate + NADP(+) = (S)-2-ethyl-2-hydroxy-3-oxobutanoate + NADPH + H(+). The protein operates within amino-acid biosynthesis; L-isoleucine biosynthesis; L-isoleucine from 2-oxobutanoate: step 2/4. It participates in amino-acid biosynthesis; L-valine biosynthesis; L-valine from pyruvate: step 2/4. Functionally, involved in the biosynthesis of branched-chain amino acids (BCAA). Catalyzes an alkyl-migration followed by a ketol-acid reduction of (S)-2-acetolactate (S2AL) to yield (R)-2,3-dihydroxy-isovalerate. In the isomerase reaction, S2AL is rearranged via a Mg-dependent methyl migration to produce 3-hydroxy-3-methyl-2-ketobutyrate (HMKB). In the reductase reaction, this 2-ketoacid undergoes a metal-dependent reduction by NADPH to yield (R)-2,3-dihydroxy-isovalerate. This is Ketol-acid reductoisomerase (NADP(+)) from Aliivibrio salmonicida (strain LFI1238) (Vibrio salmonicida (strain LFI1238)).